The following is a 261-amino-acid chain: CD40 ligand (261 aa).

The Cytoplasmic segment spans residues 1–22; it reads MIETYSQPSPRSVAAGPPVSMK. A helical; Signal-anchor for type II membrane protein membrane pass occupies residues 23–43; sequence IFMYLLTVFLITQMIGSALFA. The Extracellular segment spans residues 44–240; the sequence is AYLHRRLDKI…LQPGASVFVN (197 aa). Residues 122-261 form the THD domain; sequence IAAHVISEAS…GFTSFGLLKL (140 aa). Cysteines 178 and 218 form a disulfide. N-linked (GlcNAc...) asparagine glycosylation is present at N240.

Belongs to the tumor necrosis factor family. In terms of assembly, homotrimer. Interacts with CD28. CD40 ligand, soluble form: Exists as either a monomer or a homotrimer. Forms a ternary complex between CD40 and integrins for CD40-CD40LG signaling. In terms of processing, the soluble form derives from the membrane form by proteolytic processing.

Its subcellular location is the cell membrane. The protein resides in the cell surface. It localises to the secreted. Its function is as follows. Cytokine that acts as a ligand to CD40/TNFRSF5. Costimulates T-cell proliferation and cytokine production. Its cross-linking on T-cells generates a costimulatory signal which enhances the production of IL4 and IL10 in conjunction with the TCR/CD3 ligation and CD28 costimulation. Induces the activation of NF-kappa-B. Induces the activation of kinases MAPK8 and PAK2 in T-cells. Mediates B-cell proliferation in the absence of co-stimulus as well as IgE production in the presence of IL4. Involved in immunoglobulin class switching. In terms of biological role, acts as a ligand for integrins, specifically ITGA5:ITGB1 and ITGAV:ITGB3; both integrins and the CD40 receptor are required for activation of CD40-CD40LG signaling, which have cell-type dependent effects, such as B-cell activation, NF-kappa-B signaling and anti-apoptotic signaling. The sequence is that of CD40 ligand (CD40LG) from Sus scrofa (Pig).